A 286-amino-acid polypeptide reads, in one-letter code: tRNA (guanine-N(1)-)-methyltransferase (286 aa).

S-adenosyl-L-methionine is bound by residues Gly116 and 140 to 145; that span reads IGDYVL. Residues 232–286 form a disordered region; the sequence is DALPPGSLTPHEEALAAEARLHAGRSAETPPPAGAAGSQAEGPPGTSPSDAAVAH.

This sequence belongs to the RNA methyltransferase TrmD family. Homodimer.

The protein localises to the cytoplasm. It catalyses the reaction guanosine(37) in tRNA + S-adenosyl-L-methionine = N(1)-methylguanosine(37) in tRNA + S-adenosyl-L-homocysteine + H(+). Functionally, specifically methylates guanosine-37 in various tRNAs. This Acidothermus cellulolyticus (strain ATCC 43068 / DSM 8971 / 11B) protein is tRNA (guanine-N(1)-)-methyltransferase.